Here is a 264-residue protein sequence, read N- to C-terminus: tRNA pseudouridine synthase A (264 aa).

Residue Asp-51 is the Nucleophile of the active site. Tyr-109 contacts substrate.

It belongs to the tRNA pseudouridine synthase TruA family. In terms of assembly, homodimer.

It carries out the reaction uridine(38/39/40) in tRNA = pseudouridine(38/39/40) in tRNA. Functionally, formation of pseudouridine at positions 38, 39 and 40 in the anticodon stem and loop of transfer RNAs. The chain is tRNA pseudouridine synthase A from Actinobacillus succinogenes (strain ATCC 55618 / DSM 22257 / CCUG 43843 / 130Z).